A 557-amino-acid chain; its full sequence is Aerobic glycerol-3-phosphate dehydrogenase (557 aa).

FAD is bound at residue 21–49; the sequence is DLVIIGGGITGAGIALDASERGMKVALVE.

The protein belongs to the FAD-dependent glycerol-3-phosphate dehydrogenase family. The cofactor is FAD.

It is found in the cytoplasm. It carries out the reaction a quinone + sn-glycerol 3-phosphate = dihydroxyacetone phosphate + a quinol. The protein operates within polyol metabolism; glycerol degradation via glycerol kinase pathway; glycerone phosphate from sn-glycerol 3-phosphate (aerobic route): step 1/1. In Staphylococcus aureus (strain bovine RF122 / ET3-1), this protein is Aerobic glycerol-3-phosphate dehydrogenase (glpD).